A 273-amino-acid chain; its full sequence is ATP synthase F(1) complex subunit gamma, mitochondrial (273 aa).

K14 carries the N6-acetyllysine modification. K24 is modified (N6-succinyllysine). An N6-acetyllysine modification is found at K30. K90 is modified (N6-acetyllysine; alternate). K90 carries the post-translational modification N6-succinyllysine; alternate. An N6-acetyllysine modification is found at K113. At S121 the chain carries Phosphoserine. K129 is modified (N6-acetyllysine; alternate). K129 carries the post-translational modification N6-succinyllysine; alternate. The residue at position 172 (K172) is an N6-acetyllysine. K245 is modified (N6-succinyllysine).

The protein belongs to the ATPase gamma chain family. In terms of assembly, component of the ATP synthase complex composed at least of ATP5F1A/subunit alpha, ATP5F1B/subunit beta, ATP5MC1/subunit c (homooctomer), MT-ATP6/subunit a, MT-ATP8/subunit 8, ATP5ME/subunit e, ATP5MF/subunit f, ATP5MG/subunit g, ATP5MK/subunit k, ATP5MJ/subunit j, ATP5F1C/subunit gamma, ATP5F1D/subunit delta, ATP5F1E/subunit epsilon, ATP5PF/subunit F6, ATP5PB/subunit b, ATP5PD/subunit d, ATP5PO/subunit OSCP. ATP synthase complex consists of a soluble F(1) head domain (subunits alpha(3) and beta(3)) - the catalytic core - and a membrane F(0) domain - the membrane proton channel (subunits c, a, 8, e, f, g, k and j). These two domains are linked by a central stalk (subunits gamma, delta, and epsilon) rotating inside the F1 region and a stationary peripheral stalk (subunits F6, b, d, and OSCP). Interacts with FLVCR2; this interaction occurs in the absence of heme and is disrupted upon heme binding.

The protein resides in the mitochondrion inner membrane. Subunit gamma, of the mitochondrial membrane ATP synthase complex (F(1)F(0) ATP synthase or Complex V) that produces ATP from ADP in the presence of a proton gradient across the membrane which is generated by electron transport complexes of the respiratory chain. ATP synthase complex consist of a soluble F(1) head domain - the catalytic core - and a membrane F(1) domain - the membrane proton channel. These two domains are linked by a central stalk rotating inside the F(1) region and a stationary peripheral stalk. During catalysis, ATP synthesis in the catalytic domain of F(1) is coupled via a rotary mechanism of the central stalk subunits to proton translocation. In vivo, can only synthesize ATP although its ATP hydrolase activity can be activated artificially in vitro. With the central stalk subunit delta, is essential for the biogenesis of F(1) catalytic part of the ATP synthase complex namely in the formation of F1 assembly intermediate. The chain is ATP synthase F(1) complex subunit gamma, mitochondrial from Rattus norvegicus (Rat).